Consider the following 87-residue polypeptide: Cytochrome c6 (87 aa).

Heme c is bound by residues cysteine 10, cysteine 13, histidine 14, and methionine 56.

This sequence belongs to the cytochrome c family. PetJ subfamily. As to quaternary structure, monomer. In terms of processing, binds 1 heme c group covalently per subunit.

Its subcellular location is the plastid. The protein localises to the chloroplast thylakoid lumen. Functionally, functions as an electron carrier between membrane-bound cytochrome b6-f and photosystem I in oxygenic photosynthesis. The chain is Cytochrome c6 (petJ) from Euglena viridis (Cercaria viridis).